Here is a 316-residue protein sequence, read N- to C-terminus: Fe-S cluster assembly protein dre2 (316 aa).

Positions 1–128 are N-terminal SAM-like domain; it reads MAPRCLLIGT…KPEQEEPVSI (128 aa). Positions 129-208 are linker; it reads PLKFGKNKAN…EDDLITEADM (80 aa). The segment at 141–177 is disordered; it reads SATNGTNGAVNPDGSVPLNLNRKRDQPEPVKPAGVGF. Residues Cys218, Cys229, Cys232, and Cys234 each coordinate [2Fe-2S] cluster. The fe-S binding site A stretch occupies residues 218-234; that stretch reads CQPKPGKRRRACKDCTC. Residues Cys279, Cys282, Cys290, and Cys293 each contribute to the [4Fe-4S] cluster site. 2 consecutive short sequence motifs (cx2C motif) follow at residues 279–282 and 290–293; these read CGNC and CDGC. Residues 279-293 are fe-S binding site B; it reads CGNCALGDAFRCDGC.

The protein belongs to the anamorsin family. As to quaternary structure, monomer. Interacts with TAH18. Interacts with MIA40. Requires [2Fe-2S] cluster as cofactor. It depends on [4Fe-4S] cluster as a cofactor.

The protein resides in the cytoplasm. It localises to the mitochondrion intermembrane space. Functionally, component of the cytosolic iron-sulfur (Fe-S) protein assembly (CIA) machinery required for the maturation of extramitochondrial Fe-S proteins. Part of an electron transfer chain functioning in an early step of cytosolic Fe-S biogenesis, facilitating the de novo assembly of a [4Fe-4S] cluster on the scaffold complex CFD1-NBP35. Electrons are transferred to DRE2 from NADPH via the FAD- and FMN-containing protein TAH18. TAH18-DRE2 are also required for the assembly of the diferric tyrosyl radical cofactor of ribonucleotide reductase (RNR), probably by providing electrons for reduction during radical cofactor maturation in the catalytic small subunit RNR2. The chain is Fe-S cluster assembly protein dre2 from Pyrenophora tritici-repentis (strain Pt-1C-BFP) (Wheat tan spot fungus).